Reading from the N-terminus, the 87-residue chain is Elastase inhibitor AFLEI (87 aa).

The first 19 residues, 1–19 (MKFSLACLLALAGLQAALA), serve as a signal peptide directing secretion. Cysteine 24 and cysteine 86 are joined by a disulfide.

The protein resides in the secreted. In terms of biological role, elastase inhibitor. This chain is Elastase inhibitor AFLEI, found in Aspergillus fumigatus (strain CBS 144.89 / FGSC A1163 / CEA10) (Neosartorya fumigata).